Consider the following 416-residue polypeptide: Serine hydroxymethyltransferase (416 aa).

(6S)-5,6,7,8-tetrahydrofolate-binding positions include Leu-121 and 125 to 127; that span reads GHL. Lys-229 carries the N6-(pyridoxal phosphate)lysine modification. Position 354 to 356 (354 to 356) interacts with (6S)-5,6,7,8-tetrahydrofolate; sequence SPF.

Belongs to the SHMT family. As to quaternary structure, homodimer. Requires pyridoxal 5'-phosphate as cofactor.

It is found in the cytoplasm. It catalyses the reaction (6R)-5,10-methylene-5,6,7,8-tetrahydrofolate + glycine + H2O = (6S)-5,6,7,8-tetrahydrofolate + L-serine. The protein operates within one-carbon metabolism; tetrahydrofolate interconversion. It participates in amino-acid biosynthesis; glycine biosynthesis; glycine from L-serine: step 1/1. Functionally, catalyzes the reversible interconversion of serine and glycine with tetrahydrofolate (THF) serving as the one-carbon carrier. This reaction serves as the major source of one-carbon groups required for the biosynthesis of purines, thymidylate, methionine, and other important biomolecules. Also exhibits THF-independent aldolase activity toward beta-hydroxyamino acids, producing glycine and aldehydes, via a retro-aldol mechanism. The protein is Serine hydroxymethyltransferase of Halorhodospira halophila (strain DSM 244 / SL1) (Ectothiorhodospira halophila (strain DSM 244 / SL1)).